The chain runs to 854 residues: Lysine-specific demethylase 3 (854 aa).

The disordered stretch occupies residues 64-88; sequence QRVQQEEESLGQVPPLTEEEQQRHD. One can recognise a JmjC domain in the interval 601-806; that stretch reads LRTGNLNIAS…HCYHLTHEFR (206 aa). Positions 643, 645, and 774 each coordinate Fe cation.

This sequence belongs to the JHDM2-like histone demethylase family. Requires Fe(2+) as cofactor. Expressed in neurons close to the dorsal lateral neurons involved in circadian rhythm.

Its subcellular location is the nucleus. The protein resides in the cytoplasm. It carries out the reaction N(6),N(6)-dimethyl-L-lysyl(9)-[histone H3] + 2 2-oxoglutarate + 2 O2 = L-lysyl(9)-[histone H3] + 2 formaldehyde + 2 succinate + 2 CO2. Its function is as follows. Histone demethylase that specifically demethylates 'Lys-10' of histone H3 (H3K9), thereby playing a central role in histone code. Demethylation of Lys residue generates formaldehyde and succinate. Probably involved in regulation of chromatin structure, promoting expansion of euchromatin. Negatively regulates rhino-dependent piRNA production capacity of several genomic regions; may help define the frontiers of piRNA clusters by regulating histone methylation levels. May be involved in regulation of behavior and circadian rhythms. This is Lysine-specific demethylase 3 from Drosophila melanogaster (Fruit fly).